Consider the following 85-residue polypeptide: Sec-independent protein translocase protein TatA (85 aa).

A helical membrane pass occupies residues 7 to 27; it reads VFGSLGWTEILLILFIALLLF. The tract at residues 50–85 is disordered; sequence LTGESDDSSQQISQEQERSVPKEETKTSKSKKSKSA. Basic and acidic residues predominate over residues 64–76; the sequence is EQERSVPKEETKT.

This sequence belongs to the TatA/E family. As to quaternary structure, forms a complex with TatC.

It localises to the cell inner membrane. Its function is as follows. Part of the twin-arginine translocation (Tat) system that transports large folded proteins containing a characteristic twin-arginine motif in their signal peptide across membranes. TatA could form the protein-conducting channel of the Tat system. This is Sec-independent protein translocase protein TatA from Leptospira interrogans serogroup Icterohaemorrhagiae serovar Lai (strain 56601).